The sequence spans 377 residues: Glutamate 5-kinase (377 aa).

Residue lysine 20 participates in ATP binding. Serine 60, aspartate 147, and asparagine 159 together coordinate substrate. ATP is bound at residue 179–180 (TD). Residues 285-363 (AGRLVIDDGA…DKVYQVLGEA (79 aa)) enclose the PUA domain.

Belongs to the glutamate 5-kinase family.

It is found in the cytoplasm. It carries out the reaction L-glutamate + ATP = L-glutamyl 5-phosphate + ADP. Its pathway is amino-acid biosynthesis; L-proline biosynthesis; L-glutamate 5-semialdehyde from L-glutamate: step 1/2. In terms of biological role, catalyzes the transfer of a phosphate group to glutamate to form L-glutamate 5-phosphate. The chain is Glutamate 5-kinase from Acinetobacter baumannii (strain AB307-0294).